Reading from the N-terminus, the 315-residue chain is Protein translocase subunit SecF (315 aa).

Transmembrane regions (helical) follow at residues 12 to 32, 136 to 156, 166 to 186, 188 to 208, 247 to 267, and 271 to 291; these read AWIV…ISWA, ALFR…IIYL, VFAI…FAIF, LVGG…IIGF, SINT…FGGD, and FFAL…IFMA.

Belongs to the SecD/SecF family. SecF subfamily. Forms a complex with SecD. Part of the essential Sec protein translocation apparatus which comprises SecA, SecYEG and auxiliary proteins SecDF. Other proteins may also be involved.

It is found in the cell inner membrane. Functionally, part of the Sec protein translocase complex. Interacts with the SecYEG preprotein conducting channel. SecDF uses the proton motive force (PMF) to complete protein translocation after the ATP-dependent function of SecA. In terms of biological role, probably participates in protein translocation into and across both the cytoplasmic and thylakoid membranes in cyanobacterial cells. This Synechocystis sp. (strain ATCC 27184 / PCC 6803 / Kazusa) protein is Protein translocase subunit SecF.